The sequence spans 31 residues: Cytochrome b6-f complex subunit 6 (31 aa).

The chain crosses the membrane as a helical span at residues 4-24 (ILTYFGILFGILTITVIIFVA).

It belongs to the PetL family. The 4 large subunits of the cytochrome b6-f complex are cytochrome b6, subunit IV (17 kDa polypeptide, PetD), cytochrome f and the Rieske protein, while the 4 small subunits are PetG, PetL, PetM and PetN. The complex functions as a dimer.

The protein localises to the plastid. Its subcellular location is the chloroplast thylakoid membrane. Component of the cytochrome b6-f complex, which mediates electron transfer between photosystem II (PSII) and photosystem I (PSI), cyclic electron flow around PSI, and state transitions. PetL is important for photoautotrophic growth as well as for electron transfer efficiency and stability of the cytochrome b6-f complex. The sequence is that of Cytochrome b6-f complex subunit 6 from Chaetosphaeridium globosum (Charophycean green alga).